We begin with the raw amino-acid sequence, 431 residues long: Argininosuccinate lyase (431 aa).

It belongs to the lyase 1 family. Argininosuccinate lyase subfamily.

It localises to the cytoplasm. It carries out the reaction 2-(N(omega)-L-arginino)succinate = fumarate + L-arginine. Its pathway is amino-acid biosynthesis; L-arginine biosynthesis; L-arginine from L-ornithine and carbamoyl phosphate: step 3/3. This is Argininosuccinate lyase from Xanthomonas campestris pv. campestris (strain ATCC 33913 / DSM 3586 / NCPPB 528 / LMG 568 / P 25).